The primary structure comprises 170 residues: RNA pyrophosphohydrolase (170 aa).

In terms of domain architecture, Nudix hydrolase spans 6–149 (GFRPNVGIVI…KRDVYRRALK (144 aa)). The Nudix box signature appears at 38-59 (GGIDDGETPEQAMYRELYEEVG).

It belongs to the Nudix hydrolase family. RppH subfamily. Requires a divalent metal cation as cofactor.

Its function is as follows. Accelerates the degradation of transcripts by removing pyrophosphate from the 5'-end of triphosphorylated RNA, leading to a more labile monophosphorylated state that can stimulate subsequent ribonuclease cleavage. This is RNA pyrophosphohydrolase from Aliivibrio salmonicida (strain LFI1238) (Vibrio salmonicida (strain LFI1238)).